The chain runs to 559 residues: Membrane protein insertase YidC (559 aa).

A helical transmembrane segment spans residues 7 to 24; it reads ILWVIFSMSLVLLYDNWQ. Low complexity-rich tracts occupy residues 45–55 and 63–82; these read APAASGAAAQG and QPAT…QAAA. Residues 45–82 form a disordered region; the sequence is APAASGAAAQGDVPKANVQPATGTSAAPAAGAAPQAAA. 5 helical membrane passes run 338–358, 364–384, 434–454, 472–492, and 507–527; these read LELV…FWLL, FLGN…LVFF, LGGC…YWVL, LSVP…MFVQ, and VMMI…AGLV.

Belongs to the OXA1/ALB3/YidC family. Type 1 subfamily. As to quaternary structure, interacts with the Sec translocase complex via SecD. Specifically interacts with transmembrane segments of nascent integral membrane proteins during membrane integration.

The protein localises to the cell inner membrane. Required for the insertion and/or proper folding and/or complex formation of integral membrane proteins into the membrane. Involved in integration of membrane proteins that insert both dependently and independently of the Sec translocase complex, as well as at least some lipoproteins. Aids folding of multispanning membrane proteins. This is Membrane protein insertase YidC from Cupriavidus taiwanensis (strain DSM 17343 / BCRC 17206 / CCUG 44338 / CIP 107171 / LMG 19424 / R1) (Ralstonia taiwanensis (strain LMG 19424)).